A 432-amino-acid chain; its full sequence is Glutamate-1-semialdehyde 2,1-aminomutase (432 aa).

N6-(pyridoxal phosphate)lysine is present on Lys-272.

The protein belongs to the class-III pyridoxal-phosphate-dependent aminotransferase family. HemL subfamily. In terms of assembly, homodimer. It depends on pyridoxal 5'-phosphate as a cofactor.

Its subcellular location is the cytoplasm. The enzyme catalyses (S)-4-amino-5-oxopentanoate = 5-aminolevulinate. Its pathway is porphyrin-containing compound metabolism; protoporphyrin-IX biosynthesis; 5-aminolevulinate from L-glutamyl-tRNA(Glu): step 2/2. The protein operates within porphyrin-containing compound metabolism; chlorophyll biosynthesis. The chain is Glutamate-1-semialdehyde 2,1-aminomutase from Cyanothece sp. (strain PCC 7425 / ATCC 29141).